The following is a 281-amino-acid chain: Thioesterase PikA5 (281 aa).

The segment at 26 to 249 (RLVCLPHAGG…WHEICNDISD (224 aa)) is thioesterase. Residue Ser99 is the Nucleophile; for thioesterase activity of the active site. His233 (proton acceptor; for thioesterase activity) is an active-site residue.

The protein belongs to the thioesterase family.

Its pathway is antibiotic biosynthesis. Functionally, involved in the biosynthesis of 12- and 14-membered ring macrolactone antibiotics such as methymycin, neomethymycin, narbomycin and pikromycin. Responsible for removing mis-formed acyl moieties (aberrant decarboxylation) that are bound to the PKS and could block it. Catalyzes the cleavage of methylmalonyl-[acp]. It exhibits some acyl-group specificity, and catalyzes the cleavage of propionyl and butyryl derivatives faster than acetyl malonyl or methylmalonyl derivatives. This chain is Thioesterase PikA5, found in Streptomyces venezuelae.